The primary structure comprises 898 residues: MNNNNNNNEGVSSSSSSSSSPLPNISSPNLISNSNIENDIEIKKKSNNNNNNIFEGDNSHIYNQFLGEDFNVVHYTSNALKVSSISLSLNTLTSCTRELGQELTENITTNYDDLFKLANNIKELDQLTDTLKLGVSNLEESIQRMKNDISEPYNKVKSHIGQLKRVQDSCELLRKLIRYIQLVKKLKNHLQAGSRDLSKSAQCINEINLLKKDSDLTGINIIDSQVVWIKTCSDQIITISSTLLYQGMENQNQTDVANSLQVFHNMTILNEKVYSIVNLTTEKVIKNIKALLNVNKLIADLPKTTITNNINNNNSNNNITTNNNNNNYNNNNNNNNNNNIISTSTDKSIWLKFESLIDTLYSSLIQILHLQRVLLKIKDPLTHKSLMEVLLIKQHQLQQQQQQQQQQQQQQQQQQQQQQQQQQQVGTTSNNTQPILIEMISTLFWKSILKVLENNLLVAAKSSNIIENTFIREYPKVSKFFLDFIKKLQNYIDIHQMDIQQQFMIVLSNINQIIGNNNSNNSNSNSNNSIESSLSTSSSSSSSSSSSSSTTTTATTSLILLSADDYKLSLFKSIGLFEKAYLEYSQSKMSTIVNGLFPQSTWSSRSTLPVIPNGKQLVDLSKTIWSEIEWLVGNNDRQLLGKLMLVVSKVIDLFSSKIESMVQPPGLIVLNSNIGSSSSTGGVNNNSNSNNNNEIITINENSKPTPSQTVNTLLFNVSIQLNSSIQSLLTSQPLERESIIVIEKSLNSLITICTNIITPLMNSFFTHIEQIFSTIHNEDWYNEKTTKMLINKSNQTCSSYMESFKTLVNYFQNQYLMRFTPCQLLNNQIKSMISKIFIVYLKYCSLLKQPFSENGKLKMVNDLTHLEFAVTPLLVSGGIKEIGESYNLIRNYKQSIFN.

Positions 1-30 (MNNNNNNNEGVSSSSSSSSSPLPNISSPNL) are disordered. A coiled-coil region spans residues 129–192 (DTLKLGVSNL…VKKLKNHLQA (64 aa)). 3 disordered regions span residues 311–339 (NNNN…NNNN), 519–551 (SNNS…SSTT), and 679–705 (STGG…SKPT). A compositionally biased stretch (low complexity) spans 679–702 (STGGVNNNSNSNNNNEIITINENS).

Its subcellular location is the golgi apparatus membrane. This Dictyostelium discoideum (Social amoeba) protein is Conserved oligomeric Golgi complex subunit 5 (cog5).